The sequence spans 309 residues: Tagatose-6-phosphate kinase (309 aa).

The protein belongs to the carbohydrate kinase PfkB family. LacC subfamily.

It catalyses the reaction D-tagatofuranose 6-phosphate + ATP = D-tagatofuranose 1,6-bisphosphate + ADP + H(+). It functions in the pathway carbohydrate metabolism; D-tagatose 6-phosphate degradation; D-glyceraldehyde 3-phosphate and glycerone phosphate from D-tagatose 6-phosphate: step 1/2. The chain is Tagatose-6-phosphate kinase from Streptococcus pyogenes serotype M2 (strain MGAS10270).